The primary structure comprises 213 residues: Orotate phosphoribosyltransferase (213 aa).

K26 contributes to the 5-phospho-alpha-D-ribose 1-diphosphate binding site. 34–35 (FF) contributes to the orotate binding site. Residues 72–73 (YK), R99, K100, K103, H105, and 124–132 (DDVITAGTA) each bind 5-phospho-alpha-D-ribose 1-diphosphate. Positions 128 and 156 each coordinate orotate.

Belongs to the purine/pyrimidine phosphoribosyltransferase family. PyrE subfamily. Homodimer. It depends on Mg(2+) as a cofactor.

The enzyme catalyses orotidine 5'-phosphate + diphosphate = orotate + 5-phospho-alpha-D-ribose 1-diphosphate. It participates in pyrimidine metabolism; UMP biosynthesis via de novo pathway; UMP from orotate: step 1/2. Functionally, catalyzes the transfer of a ribosyl phosphate group from 5-phosphoribose 1-diphosphate to orotate, leading to the formation of orotidine monophosphate (OMP). The chain is Orotate phosphoribosyltransferase from Edwardsiella ictaluri (strain 93-146).